Consider the following 331-residue polypeptide: Meiotically up-regulated gene 172 protein (331 aa).

Residues 72–166 (IKNNEYEKQR…KGNYGLVKAR (95 aa)) are a coiled coil.

Belongs to the ADIP family.

The protein resides in the cytoplasm. Functionally, has a role in meiosis. This is Meiotically up-regulated gene 172 protein (mug172) from Schizosaccharomyces pombe (strain 972 / ATCC 24843) (Fission yeast).